The following is a 124-amino-acid chain: Urease subunit beta (124 aa).

It belongs to the urease beta subunit family. In terms of assembly, heterotrimer of UreA (gamma), UreB (beta) and UreC (alpha) subunits. Three heterotrimers associate to form the active enzyme.

Its subcellular location is the cytoplasm. It carries out the reaction urea + 2 H2O + H(+) = hydrogencarbonate + 2 NH4(+). The protein operates within nitrogen metabolism; urea degradation; CO(2) and NH(3) from urea (urease route): step 1/1. This is Urease subunit beta from Halalkalibacterium halodurans (strain ATCC BAA-125 / DSM 18197 / FERM 7344 / JCM 9153 / C-125) (Bacillus halodurans).